We begin with the raw amino-acid sequence, 393 residues long: Prokineticin receptor 1 (393 aa).

The Extracellular segment spans residues 1-62 (METTVGALGE…TNSRTFFAAK (62 aa)). N-linked (GlcNAc...) asparagine glycosylation occurs at Asn11. Residues 63-83 (IVIGMALVGIMLVCGIGNFIF) form a helical membrane-spanning segment. Topologically, residues 84–98 (ITALARYKKLRNLTN) are cytoplasmic. The helical transmembrane segment at 99 to 119 (LLIANLAISDFLVAIVCCPFE) threads the bilayer. Topologically, residues 120-146 (MDYYVVRQLSWEHGHVLCASVNYLRTV) are extracellular. Cys137 and Cys217 are joined by a disulfide. Residues 147–167 (SLYVSTNALLAIAIDRYLAIV) form a helical membrane-spanning segment. The Cytoplasmic portion of the chain corresponds to 168-179 (HPLRPRMKCQTA). The helical transmembrane segment at 180–200 (AGLIFLVWSVSILIAIPAAYF) threads the bilayer. The Extracellular segment spans residues 201–232 (TTETVLVIVERQEKIFCGQIWPVDQQFYYRSY). A helical membrane pass occupies residues 233–253 (FLLVFGLEFVGPVVAMTLCYA). Residues 254 to 282 (RVSRELWFKAVPGFQTEQIRRRLRCRRRT) are Cytoplasmic-facing. Residues 283–303 (VLGLVCVLSAYVLCWAPFYGF) form a helical membrane-spanning segment. Topologically, residues 304–322 (TIVRDFFPSVFVKEKHYLT) are extracellular. The helical transmembrane segment at 323-343 (AFYVVECIAMSNSMINTLCFV) threads the bilayer. Residues 344-393 (TVRNNTSKYLKRILRLQWRASPSGSKASADLDLRTTGIPATEEVDCIRLK) are Cytoplasmic-facing.

The protein belongs to the G-protein coupled receptor 1 family. In terms of tissue distribution, expressed at high levels in the heart, skeletal muscle and pancreas. Expressed at lower levels in the brain, lung, liver and kidney.

The protein resides in the cell membrane. In terms of biological role, receptor for prokineticin 1. Exclusively coupled to the G(q) subclass of heteromeric G proteins. Activation leads to mobilization of calcium, stimulation of phosphoinositide turnover and activation of p44/p42 mitogen-activated protein kinase. May play a role during early pregnancy. The polypeptide is Prokineticin receptor 1 (Prokr1) (Mus musculus (Mouse)).